The chain runs to 618 residues: Beta-xylosidase (618 aa).

2 disordered regions span residues 76–100 (ERDRYTTDESDSGSSERHSVQQEES) and 463–509 (LEPQ…PPIQ).

The protein belongs to the glycosyl hydrolase 52 family.

It is found in the secreted. It carries out the reaction Hydrolysis of (1-&gt;4)-beta-D-xylans, to remove successive D-xylose residues from the non-reducing termini.. Its pathway is glycan degradation; xylan degradation. The protein is Beta-xylosidase (xylA) of Geobacillus stearothermophilus (Bacillus stearothermophilus).